The chain runs to 211 residues: MIERTFVGENVSETLIDEYFKTKLVRAGYSHIDFKKTPIGTRITVFAEKPGFVIGRKGKMVKELTETLATEYSVKNPQIEVKQVENPDLDPAVVGHKIASSLERGMHFRKTAHSAIRRVMGSGAKGVAIIVSGKLSGERSRTEKFMDGYMKHCGEPAEALVNKSHQLAKLKLGIVGVTVKIMRPDVSLPDEIVISSGEIKEVSEISEVSQE.

The KH type-2 domain occupies Ile-16–Glu-85.

This sequence belongs to the universal ribosomal protein uS3 family. As to quaternary structure, part of the 30S ribosomal subunit.

Binds the lower part of the 30S subunit head. In Methanococcus maripaludis (strain DSM 14266 / JCM 13030 / NBRC 101832 / S2 / LL), this protein is Small ribosomal subunit protein uS3.